A 171-amino-acid polypeptide reads, in one-letter code: 3-hydroxydecanoyl-[acyl-carrier-protein] dehydratase (171 aa).

His-70 is a catalytic residue.

It belongs to the thioester dehydratase family. FabA subfamily. As to quaternary structure, homodimer.

It is found in the cytoplasm. It carries out the reaction a (3R)-hydroxyacyl-[ACP] = a (2E)-enoyl-[ACP] + H2O. The enzyme catalyses (3R)-hydroxydecanoyl-[ACP] = (2E)-decenoyl-[ACP] + H2O. The catalysed reaction is (2E)-decenoyl-[ACP] = (3Z)-decenoyl-[ACP]. Its pathway is lipid metabolism; fatty acid biosynthesis. In terms of biological role, necessary for the introduction of cis unsaturation into fatty acids. Catalyzes the dehydration of (3R)-3-hydroxydecanoyl-ACP to E-(2)-decenoyl-ACP and then its isomerization to Z-(3)-decenoyl-ACP. Can catalyze the dehydratase reaction for beta-hydroxyacyl-ACPs with saturated chain lengths up to 16:0, being most active on intermediate chain length. This chain is 3-hydroxydecanoyl-[acyl-carrier-protein] dehydratase, found in Pseudoalteromonas translucida (strain TAC 125).